Reading from the N-terminus, the 301-residue chain is tRNA-cytidine(32) 2-sulfurtransferase (301 aa).

A PP-loop motif motif is present at residues 55–60; it reads SGGKDS. [4Fe-4S] cluster-binding residues include cysteine 130, cysteine 133, and cysteine 221.

The protein belongs to the TtcA family. Homodimer. Requires Mg(2+) as cofactor. It depends on [4Fe-4S] cluster as a cofactor.

The protein resides in the cytoplasm. It catalyses the reaction cytidine(32) in tRNA + S-sulfanyl-L-cysteinyl-[cysteine desulfurase] + AH2 + ATP = 2-thiocytidine(32) in tRNA + L-cysteinyl-[cysteine desulfurase] + A + AMP + diphosphate + H(+). The protein operates within tRNA modification. In terms of biological role, catalyzes the ATP-dependent 2-thiolation of cytidine in position 32 of tRNA, to form 2-thiocytidine (s(2)C32). The sulfur atoms are provided by the cysteine/cysteine desulfurase (IscS) system. This chain is tRNA-cytidine(32) 2-sulfurtransferase, found in Acinetobacter baylyi (strain ATCC 33305 / BD413 / ADP1).